The chain runs to 155 residues: 6,7-dimethyl-8-ribityllumazine synthase (155 aa).

5-amino-6-(D-ribitylamino)uracil-binding positions include Trp-23, 57-59 (AWE), and 81-83 (CVI). A (2S)-2-hydroxy-3-oxobutyl phosphate-binding site is contributed by 86–87 (DT). Catalysis depends on His-89, which acts as the Proton donor. A 5-amino-6-(D-ribitylamino)uracil-binding site is contributed by Asn-114. A (2S)-2-hydroxy-3-oxobutyl phosphate-binding site is contributed by Arg-128.

The protein belongs to the DMRL synthase family. In terms of assembly, forms an icosahedral capsid composed of 60 subunits, arranged as a dodecamer of pentamers.

The enzyme catalyses (2S)-2-hydroxy-3-oxobutyl phosphate + 5-amino-6-(D-ribitylamino)uracil = 6,7-dimethyl-8-(1-D-ribityl)lumazine + phosphate + 2 H2O + H(+). The protein operates within cofactor biosynthesis; riboflavin biosynthesis; riboflavin from 2-hydroxy-3-oxobutyl phosphate and 5-amino-6-(D-ribitylamino)uracil: step 1/2. Catalyzes the formation of 6,7-dimethyl-8-ribityllumazine by condensation of 5-amino-6-(D-ribitylamino)uracil with 3,4-dihydroxy-2-butanone 4-phosphate. This is the penultimate step in the biosynthesis of riboflavin. This Stenotrophomonas maltophilia (strain R551-3) protein is 6,7-dimethyl-8-ribityllumazine synthase.